Reading from the N-terminus, the 433-residue chain is Serine/threonine-protein kinase STK11 (433 aa).

Position 31 is a phosphoserine (Ser31). N6-acetyllysine occurs at positions 44 and 48. The sufficient for interaction with SIRT1 stretch occupies residues 45–90; that stretch reads LIGKYLMGDLLGEGSYGKVKEVLDSETLCRRAVKILKKKKLRRIPN. One can recognise a Protein kinase domain in the interval 49–309; that stretch reads YLMGDLLGEG…IRQIRQHSWF (261 aa). ATP-binding positions include 55–63 and Lys78; that span reads LGEGSYGKV. Residues Lys96 and Lys97 each carry the N6-acetyllysine modification. Asp176 acts as the Proton acceptor in catalysis. The residue at position 189 (Thr189) is a Phosphothreonine; by autocatalysis. An N6-acetyllysine mark is found at Lys296 and Lys311. The interval 312–331 is disordered; sequence KHPPAEAPVPIPPSPDTKDR. The segment covering 316–326 has biased composition (pro residues); sequence AEAPVPIPPSP. Phosphoserine is present on Ser325. Phosphothreonine; by autocatalysis is present on Thr336. Thr363 bears the Phosphothreonine; by ATM and autocatalysis mark. The disordered stretch occupies residues 397-433; it reads AAQLSTKSRAEGRAPNPARKACSASSKIRRLSACKQQ. Phosphoserine occurs at positions 399 and 401. At Lys416 the chain carries N6-acetyllysine. A lipid anchor (S-palmitoyl cysteine) is attached at Cys418. An N6-acetyllysine modification is found at Lys423. Over residues 423 to 433 the composition is skewed to basic residues; the sequence is KIRRLSACKQQ. Phosphoserine; by autocatalysis, PKA, PKC/PRKCZ and RPS6KA1 is present on Ser428. At Cys430 the chain carries Cysteine methyl ester. Cys430 is lipidated: S-farnesyl cysteine. Position 431 is an N6-acetyllysine (Lys431). Residues 431–433 constitute a propeptide, removed in mature form; the sequence is KQQ.

This sequence belongs to the protein kinase superfamily. CAMK Ser/Thr protein kinase family. LKB1 subfamily. As to quaternary structure, catalytic component of a trimeric complex composed of STK11/LKB1, STRAD (STRADA or STRADB) and CAB39/MO25 (CAB39/MO25alpha or CAB39L/MO25beta): the complex tethers STK11/LKB1 in the cytoplasm and stimulates its catalytic activity. Found in a ternary complex composed of SMAD4, STK11/LKB1 and STK11IP. Interacts with p53/TP53, SMAD4, STK11IP and WDR6. Interacts with NR4A1. Interacts with NISCH; this interaction may increase STK11 activity. Interacts with PTEN; leading to PTEN phosphorylation. Interacts with SIRT1; the interaction deacetylates STK11. Interacts with CDKN1A. Requires Mg(2+) as cofactor. Mn(2+) is required as a cofactor. Post-translationally, phosphorylated by ATM at Thr-363 following ionizing radiation (IR). Phosphorylation at Ser-428 by RPS6KA1 and/or some PKA is required to inhibit cell growth. Phosphorylation at Ser-428 is also required during neuronal polarization to mediate phosphorylation of BRSK1 and BRSK2. Phosphorylation by PKC/PRKCZ at Ser-399 in isoform 2 promotes metformin (or peroxynitrite)-induced nuclear export of STK11 and activation of AMPK. UV radiation-induced phosphorylation at Thr-363 mediates CDKN1A degradation. In terms of processing, acetylated. Deacetylation at Lys-48 enhances cytoplasmic localization and kinase activity in vitro. Ubiquitously expressed. Strongest expression in testis and fetal liver.

It is found in the nucleus. The protein resides in the cytoplasm. The protein localises to the membrane. It localises to the mitochondrion. It catalyses the reaction L-seryl-[protein] + ATP = O-phospho-L-seryl-[protein] + ADP + H(+). The enzyme catalyses L-threonyl-[protein] + ATP = O-phospho-L-threonyl-[protein] + ADP + H(+). With respect to regulation, activated by forming a complex with STRAD (STRADA or STRADB) and CAB39/MO25 (CAB39/MO25alpha or CAB39L/MO25beta): STRADA (or STRADB)-binding promotes a conformational change of STK11/LKB1 in an active conformation, which is stabilized by CAB39/MO25alpha (or CAB39L/MO25beta) interacting with the STK11/LKB1 activation loop. Sequestration in the nucleus by NR4A1 prevents it from phosphorylating and activating cytoplasmic AMPK. In terms of biological role, tumor suppressor serine/threonine-protein kinase that controls the activity of AMP-activated protein kinase (AMPK) family members, thereby playing a role in various processes such as cell metabolism, cell polarity, apoptosis and DNA damage response. Acts by phosphorylating the T-loop of AMPK family proteins, thus promoting their activity: phosphorylates PRKAA1, PRKAA2, BRSK1, BRSK2, MARK1, MARK2, MARK3, MARK4, NUAK1, NUAK2, SIK1, SIK2, SIK3 and SNRK but not MELK. Also phosphorylates non-AMPK family proteins such as STRADA, PTEN and possibly p53/TP53. Acts as a key upstream regulator of AMPK by mediating phosphorylation and activation of AMPK catalytic subunits PRKAA1 and PRKAA2 and thereby regulates processes including: inhibition of signaling pathways that promote cell growth and proliferation when energy levels are low, glucose homeostasis in liver, activation of autophagy when cells undergo nutrient deprivation, and B-cell differentiation in the germinal center in response to DNA damage. Also acts as a regulator of cellular polarity by remodeling the actin cytoskeleton. Required for cortical neuron polarization by mediating phosphorylation and activation of BRSK1 and BRSK2, leading to axon initiation and specification. Involved in DNA damage response: interacts with p53/TP53 and recruited to the CDKN1A/WAF1 promoter to participate in transcription activation. Able to phosphorylate p53/TP53; the relevance of such result in vivo is however unclear and phosphorylation may be indirect and mediated by downstream STK11/LKB1 kinase NUAK1. Also acts as a mediator of p53/TP53-dependent apoptosis via interaction with p53/TP53: translocates to the mitochondrion during apoptosis and regulates p53/TP53-dependent apoptosis pathways. Regulates UV radiation-induced DNA damage response mediated by CDKN1A. In association with NUAK1, phosphorylates CDKN1A in response to UV radiation and contributes to its degradation which is necessary for optimal DNA repair. Its function is as follows. Has a role in spermiogenesis. The protein is Serine/threonine-protein kinase STK11 of Homo sapiens (Human).